A 145-amino-acid polypeptide reads, in one-letter code: Small ribosomal subunit protein uS12 (145 aa).

The protein belongs to the universal ribosomal protein uS12 family. Part of the 30S ribosomal subunit.

With S4 and S5 plays an important role in translational accuracy. Located at the interface of the 30S and 50S subunits. The chain is Small ribosomal subunit protein uS12 from Cenarchaeum symbiosum (strain A).